The chain runs to 2540 residues: Probable JmjC domain-containing histone demethylation protein 2C (2540 aa).

A compositionally biased stretch (polar residues) spans 278–309 (TRAQANSPRPAMNSQAAVPKQNTHQQQQQRSI). Residues 278–478 (TRAQANSPRP…TVSDHNSNDL (201 aa)) form a disordered region. Serine 317 and serine 320 each carry phosphoserine. Positions 323–342 (DEEKMKEEKYDYISRGENPK) are enriched in basic and acidic residues. The segment covering 343 to 353 (GKNKHLMNKRR) has biased composition (basic residues). Positions 354-371 (KPEEDEKKLNMKRLRTDN) are enriched in basic and acidic residues. Residues serine 373 and serine 376 each carry the phosphoserine modification. Residues 373–382 (SDFSESSDSE) are compositionally biased toward low complexity. 3 stretches are compositionally biased toward basic and acidic residues: residues 383–403 (NSNK…ELKN), 410–427 (NGEE…EETL), and 438–452 (QEDK…RKSV). Residues 464-478 (SSEQSTVSDHNSNDL) are compositionally biased toward polar residues. Phosphoserine occurs at positions 475 and 501. The residue at position 505 (threonine 505) is a Phosphothreonine. A phosphoserine mark is found at serine 601, serine 617, serine 638, serine 639, serine 641, serine 652, and serine 943. The interval 631–656 (VDTHKIKSSPSPEVVKPKITHSPDSV) is disordered. Disordered regions lie at residues 1242-1263 (GKVQ…SQAN) and 1614-1692 (NRRK…NSNT). The segment covering 1643-1652 (KRQPKPTYKK) has biased composition (basic residues). Basic and acidic residues predominate over residues 1653-1669 (KQNDLQKRKGEIEEDLK). A C6-type zinc finger spans residues 1846–1871 (CDACEATLFNIHWVCQKCGFVVCLDC). Positions 1971–1991 (PESQQQNTPPKSEKNGGSSPE) are enriched in polar residues. The segment at 1971-2064 (PESQQQNTPP…LVSQNNEQGS (94 aa)) is disordered. Serine 1989 is subject to Phosphoserine. The segment covering 2016–2043 (AEQKAREEKKENKELTLENQIKEEREQD) has biased composition (basic and acidic residues). Residues 2045-2064 (SESPNGRTSPLVSQNNEQGS) show a composition bias toward polar residues. Residues 2066–2070 (LRDLL) carry the LXXLL motif motif. Glycyl lysine isopeptide (Lys-Gly) (interchain with G-Cter in SUMO2) cross-links involve residues lysine 2132 and lysine 2136. The region spanning 2274–2498 (MPARYEDLLK…ESFHLTQELR (225 aa)) is the JmjC domain. Fe cation is bound by residues histidine 2336, glutamate 2338, and histidine 2466.

This sequence belongs to the JHDM2 histone demethylase family. Interacts specifically with the ligand-binding domain of the thyroid receptor (TR). Requires the presence of thyroid hormone for its interaction. The cofactor is Fe(2+).

It is found in the nucleus. Probable histone demethylase that specifically demethylates 'Lys-9' of histone H3, thereby playing a central role in histone code. Demethylation of Lys residue generates formaldehyde and succinate. May be involved in hormone-dependent transcriptional activation, by participating in recruitment to androgen-receptor target genes. This chain is Probable JmjC domain-containing histone demethylation protein 2C (JMJD1C), found in Homo sapiens (Human).